We begin with the raw amino-acid sequence, 278 residues long: E3 ubiquitin-protein ligase MARCHF5 (278 aa).

Residues 6-75 (LQQMLDRSCW…PQCNAEYLIV (70 aa)) form an RING-CH-type zinc finger. Zn(2+) contacts are provided by C14, C17, C33, C35, H43, C46, C65, and C68. 4 helical membrane-spanning segments follow: residues 99–119 (FAAA…YGAV), 139–159 (PLFL…GKMI), 209–229 (ILCG…LMFS), and 238–258 (TILG…YFKQ).

In terms of assembly, monomer and homodimer. Interacts with MFN1, MFN2, DNM1L and FIS1. Autoubiquitinated leading to degradation (short half-life).

It is found in the mitochondrion outer membrane. It carries out the reaction S-ubiquitinyl-[E2 ubiquitin-conjugating enzyme]-L-cysteine + [acceptor protein]-L-lysine = [E2 ubiquitin-conjugating enzyme]-L-cysteine + N(6)-ubiquitinyl-[acceptor protein]-L-lysine.. It functions in the pathway protein modification; protein ubiquitination. In terms of biological role, mitochondrial E3 ubiquitin-protein ligase that plays a crucial role in the control of mitochondrial morphology by acting as a positive regulator of mitochondrial fission and as an important regulator of immune response. Plays a crucial role in maintaining mitochondrial homeostasis by regulating the dynamics of mitochondria through the ubiquitination of key proteins involved in fission and fusion such as FIS1, DNM1L and MFN1. Acts as a critical determinant of mitotic apoptosis through both MCL1-dependent and -independent pathways. Turns off persistent immune signaling by degrading oligomeric complexes of retinoic acid-inducible gene I/DDX58 and mitochondrial antiviral-signaling protein/MAVS formed upon RNA virus infection. Promotes STING-mediated type-I interferon production via 'Lys-63'-linked ubiquitination of STING1 thereby preserving its activity and preventing the formation of inactive STING1 polymers. Plays also an essential role in the formation of PEX3-containing vesicles in the de novo biogenesis of peroxisomes from mitochondria. Acts as a regulator of NLRP3 inflammasome activation on the mitochondria by mediating the 'Lys-27'-linked polyubiquitination of NLRP3, positively regulating the NLRP3-NEK7 complex formation and NLRP3 oligomerization. This chain is E3 ubiquitin-protein ligase MARCHF5 (MARCHF5), found in Bos taurus (Bovine).